Here is a 117-residue protein sequence, read N- to C-terminus: Large ribosomal subunit protein uL18 (117 aa).

The protein belongs to the universal ribosomal protein uL18 family. Part of the 50S ribosomal subunit; part of the 5S rRNA/L5/L18/L25 subcomplex. Contacts the 5S and 23S rRNAs.

This is one of the proteins that bind and probably mediate the attachment of the 5S RNA into the large ribosomal subunit, where it forms part of the central protuberance. The protein is Large ribosomal subunit protein uL18 of Pseudoalteromonas atlantica (strain T6c / ATCC BAA-1087).